We begin with the raw amino-acid sequence, 161 residues long: Protein-export protein SecB (161 aa).

The protein belongs to the SecB family. Homotetramer, a dimer of dimers. One homotetramer interacts with 1 SecA dimer.

Its subcellular location is the cytoplasm. Its function is as follows. One of the proteins required for the normal export of preproteins out of the cell cytoplasm. It is a molecular chaperone that binds to a subset of precursor proteins, maintaining them in a translocation-competent state. It also specifically binds to its receptor SecA. This is Protein-export protein SecB from Rhodopseudomonas palustris (strain BisA53).